The chain runs to 455 residues: Chromosomal replication initiator protein DnaA (455 aa).

The domain I, interacts with DnaA modulators stretch occupies residues 1–75; the sequence is MDTNNNIEKE…EILSQNKVGM (75 aa). Residues 75–106 form a domain II region; it reads MHLAHSVDVRIEVAPKIQINAQANINYKAIKT. Positions 107–321 are domain III, AAA+ region; the sequence is SVKDSYTFEN…GAIIKISVNA (215 aa). ATP contacts are provided by Gly-151, Gly-153, Lys-154, and Thr-155. The domain IV, binds dsDNA stretch occupies residues 322–455; sequence NLMNAPIDLN…DKKTAFNSSE (134 aa).

This sequence belongs to the DnaA family. In terms of assembly, oligomerizes as a right-handed, spiral filament on DNA at oriC.

The protein resides in the cytoplasm. Functionally, plays an essential role in the initiation and regulation of chromosomal replication. ATP-DnaA binds to the origin of replication (oriC) to initiate formation of the DNA replication initiation complex once per cell cycle. Binds the DnaA box (a 9 base pair repeat at the origin) and separates the double-stranded (ds)DNA. Forms a right-handed helical filament on oriC DNA; dsDNA binds to the exterior of the filament while single-stranded (ss)DNA is stabiized in the filament's interior. The ATP-DnaA-oriC complex binds and stabilizes one strand of the AT-rich DNA unwinding element (DUE), permitting loading of DNA polymerase. After initiation quickly degrades to an ADP-DnaA complex that is not apt for DNA replication. Binds acidic phospholipids. The sequence is that of Chromosomal replication initiator protein DnaA from Helicobacter pylori (strain P12).